The chain runs to 900 residues: Isoleucine--tRNA ligase (900 aa).

Positions 58-68 (PYANGNIHIGH) match the 'HIGH' region motif. Glutamate 552 lines the L-isoleucyl-5'-AMP pocket. A 'KMSKS' region motif is present at residues 593-597 (KMSKS). Lysine 596 lines the ATP pocket.

The protein belongs to the class-I aminoacyl-tRNA synthetase family. IleS type 1 subfamily. As to quaternary structure, monomer.

The protein localises to the cytoplasm. The enzyme catalyses tRNA(Ile) + L-isoleucine + ATP = L-isoleucyl-tRNA(Ile) + AMP + diphosphate. In terms of biological role, catalyzes the attachment of isoleucine to tRNA(Ile). As IleRS can inadvertently accommodate and process structurally similar amino acids such as valine, to avoid such errors it has two additional distinct tRNA(Ile)-dependent editing activities. One activity is designated as 'pretransfer' editing and involves the hydrolysis of activated Val-AMP. The other activity is designated 'posttransfer' editing and involves deacylation of mischarged Val-tRNA(Ile). This Ureaplasma parvum serovar 3 (strain ATCC 700970) protein is Isoleucine--tRNA ligase.